We begin with the raw amino-acid sequence, 158 residues long: Deoxyuridine 5'-triphosphate nucleotidohydrolase (158 aa).

Residues 75 to 77 (RSG), Asn-88, 92 to 94 (TVD), and Lys-102 each bind substrate.

The protein belongs to the dUTPase family. It depends on Mg(2+) as a cofactor.

The catalysed reaction is dUTP + H2O = dUMP + diphosphate + H(+). It participates in pyrimidine metabolism; dUMP biosynthesis; dUMP from dCTP (dUTP route): step 2/2. Functionally, this enzyme is involved in nucleotide metabolism: it produces dUMP, the immediate precursor of thymidine nucleotides and it decreases the intracellular concentration of dUTP so that uracil cannot be incorporated into DNA. This chain is Deoxyuridine 5'-triphosphate nucleotidohydrolase, found in Bifidobacterium longum (strain DJO10A).